A 125-amino-acid polypeptide reads, in one-letter code: Protein ApaG (125 aa).

In terms of domain architecture, ApaG spans 1–125 (MIEQPRICVQ…FRLAIPALIH (125 aa)).

This Yersinia pestis bv. Antiqua (strain Antiqua) protein is Protein ApaG.